The primary structure comprises 224 residues: Vesicle transport through interaction with t-SNAREs homolog 1A (224 aa).

The Cytoplasmic portion of the chain corresponds to 1-199; the sequence is MSADFEGYEQ…GMLRRIIQNR (199 aa). Coiled-coil stretches lie at residues 31–92 and 106–185; these read PDEK…KRSR and DAGN…GKSS. A helical; Anchor for type IV membrane protein transmembrane segment spans residues 200 to 220; that stretch reads ILLVILGIIVVITILTAITFF. The Vesicular portion of the chain corresponds to 221 to 224; that stretch reads VRGH.

It belongs to the VTI1 family. Interacts with distinct SNARE complexes that contain either STX5 or STX6. Interacts with NAPA and, to a lesser extent, with NAPG. Identified in a complex containing STX6, STX12, VAMP4 and VTI1A. As to expression, specifically expressed in the neuronal tissues cerebellum, cortex and hippocampus. Isoform 1/VTI1A is expressed in the same neuronal tissues but also in lung, liver, kidney and spleen.

Its subcellular location is the membrane. The protein localises to the cytoplasmic vesicle. It localises to the secretory vesicle. The protein resides in the synaptic vesicle membrane. It is found in the clathrin-coated vesicle membrane. Its subcellular location is the golgi apparatus membrane. Functionally, V-SNARE that mediates vesicle transport pathways through interactions with t-SNAREs on the target membrane. These interactions are proposed to mediate aspects of the specificity of vesicle trafficking and to promote fusion of the lipid bilayers. Involved in vesicular transport from the late endosomes to the trans-Golgi network. Along with VAMP7, involved in an non-conventional RAB1-dependent traffic route to the cell surface used by KCNIP1 and KCND2. May be concerned with increased secretion of cytokines associated with cellular senescence. The sequence is that of Vesicle transport through interaction with t-SNAREs homolog 1A (Vti1a) from Rattus norvegicus (Rat).